Reading from the N-terminus, the 158-residue chain is Lipoprotein signal peptidase (158 aa).

3 helical membrane passes run 12–32 (LFWW…AWIV), 46–66 (IIPG…FSLF), and 71–91 (IWLR…AILG). Catalysis depends on residues aspartate 124 and aspartate 140. A helical membrane pass occupies residues 135-155 (VFNVADIAINIGIVCLLWSAW).

It belongs to the peptidase A8 family.

It is found in the cell inner membrane. It catalyses the reaction Release of signal peptides from bacterial membrane prolipoproteins. Hydrolyzes -Xaa-Yaa-Zaa-|-(S,diacylglyceryl)Cys-, in which Xaa is hydrophobic (preferably Leu), and Yaa (Ala or Ser) and Zaa (Gly or Ala) have small, neutral side chains.. It functions in the pathway protein modification; lipoprotein biosynthesis (signal peptide cleavage). Its function is as follows. This protein specifically catalyzes the removal of signal peptides from prolipoproteins. The chain is Lipoprotein signal peptidase from Thermosynechococcus vestitus (strain NIES-2133 / IAM M-273 / BP-1).